We begin with the raw amino-acid sequence, 350 residues long: Transmembrane protein 185A (350 aa).

A run of 7 helical transmembrane segments spans residues 16 to 36, 41 to 61, 81 to 101, 111 to 131, 177 to 197, 211 to 231, and 240 to 260; these read LIYA…DGII, WAVF…ASVG, FKAM…EVLV, FWLL…AACV, ILMS…VLFL, ITMA…EILL, and AFSC…LMAT. Residues 298–350 form a mediates interaction with MAP1B region; that stretch reads DLHHEDNEETEETPVPEPPKIAPMFRKKARVVITQSPGKYALPPPKLNIEMPD.

This sequence belongs to the TMEM185 family. As to quaternary structure, interacts with MAP1B.

The protein localises to the cell projection. Its subcellular location is the dendrite. It is found in the membrane. The sequence is that of Transmembrane protein 185A (TMEM185A) from Pongo abelii (Sumatran orangutan).